Consider the following 343-residue polypeptide: Ribonucleoside-diphosphate reductase small subunit (343 aa).

3 residues coordinate Fe cation: Asp101, Glu131, and His134. Tyr138 is an active-site residue. Residues 188–208 (ILMILIEGIFFSASFAAIAYL) form a helical membrane-spanning segment. Fe cation-binding residues include Glu194, Glu228, and His231.

It belongs to the ribonucleoside diphosphate reductase small chain family. Heterotetramer composed of a homodimer of the large subunit (R1) and a homodimer of the small subunit (R2). Larger multisubunit protein complex are also active, composed of (R1)n(R2)n. Fe cation is required as a cofactor.

Its subcellular location is the host membrane. It carries out the reaction a 2'-deoxyribonucleoside 5'-diphosphate + [thioredoxin]-disulfide + H2O = a ribonucleoside 5'-diphosphate + [thioredoxin]-dithiol. Its function is as follows. Ribonucleoside-diphosphate reductase holoenzyme provides the precursors necessary for viral DNA synthesis. Allows virus growth in non-dividing cells, as well as reactivation from latency in infected hosts. Catalyzes the biosynthesis of deoxyribonucleotides from the corresponding ribonucleotides. The chain is Ribonucleoside-diphosphate reductase small subunit from Gallid herpesvirus 2 (strain Chicken/Md5/ATCC VR-987) (GaHV-2).